The sequence spans 1196 residues: DNA-directed RNA polymerase subunit beta (1196 aa).

This sequence belongs to the RNA polymerase beta chain family. The RNAP catalytic core consists of 2 alpha, 1 beta, 1 beta' and 1 omega subunit. When a sigma factor is associated with the core the holoenzyme is formed, which can initiate transcription.

The enzyme catalyses RNA(n) + a ribonucleoside 5'-triphosphate = RNA(n+1) + diphosphate. Functionally, DNA-dependent RNA polymerase catalyzes the transcription of DNA into RNA using the four ribonucleoside triphosphates as substrates. The sequence is that of DNA-directed RNA polymerase subunit beta from Lactococcus lactis subsp. cremoris (strain MG1363).